Reading from the N-terminus, the 226-residue chain is Gap junction beta-2 protein (226 aa).

An intramembrane segment occupies aspartate 2–valine 13. The Cytoplasmic segment spans residues asparagine 14–isoleucine 20. Residues glycine 21–alanine 40 traverse the membrane as a helical segment. At lysine 41 to histidine 73 the chain is on the extracellular side. Ca(2+)-binding residues include glutamate 42, glycine 45, and glutamate 47. 3 disulfides stabilise this stretch: cysteine 53-cysteine 180, cysteine 60-cysteine 174, and cysteine 64-cysteine 169. The chain crosses the membrane as a helical span at residues isoleucine 74–histidine 94. The Cytoplasmic portion of the chain corresponds to valine 95–threonine 135. Residues tyrosine 136–valine 156 traverse the membrane as a helical segment. At methionine 157–threonine 189 the chain is on the extracellular side. A helical membrane pass occupies residues valine 190–leucine 210. Residues cysteine 211 to valine 226 lie on the Cytoplasmic side of the membrane.

The protein belongs to the connexin family. Beta-type (group I) subfamily. A hemichannel or connexon is composed of a hexamer of connexins. A functional gap junction is formed by the apposition of two hemichannels. Forms heteromeric channels with GJB4. Interacts with CNST.

The protein localises to the cell membrane. Its subcellular location is the cell junction. It is found in the gap junction. Its function is as follows. Structural component of gap junctions. Gap junctions are dodecameric channels that connect the cytoplasm of adjoining cells. They are formed by the docking of two hexameric hemichannels, one from each cell membrane. Small molecules and ions diffuse from one cell to a neighboring cell via the central pore. This chain is Gap junction beta-2 protein (GJB2), found in Gorilla gorilla gorilla (Western lowland gorilla).